Here is an 82-residue protein sequence, read N- to C-terminus: MIKLRLKRYGKKREVSYRIVAMRSTSRRDGRPLEELGFYNPRTDETRLNVPAIVKRLQDGAQPTETVRNILQKAKVFEQVNA.

It belongs to the bacterial ribosomal protein bS16 family.

The sequence is that of Small ribosomal subunit protein bS16 from Gloeothece citriformis (strain PCC 7424) (Cyanothece sp. (strain PCC 7424)).